The primary structure comprises 488 residues: Probable 26S proteasome non-ATPase regulatory subunit 3 (488 aa).

The disordered stretch occupies residues 1–20 (MTQDVEMKEQAAPPSNSLSS). In terms of domain architecture, PCI spans 240–421 (SRYLFYLGKI…GWMVSKETGD (182 aa)). A disordered region spans residues 452-488 (FPPNSHKEKESAEKRRERQQQEQELAKHIAEEDDDDF). The segment covering 456–481 (SHKEKESAEKRRERQQQEQELAKHIA) has biased composition (basic and acidic residues).

The protein belongs to the proteasome subunit S3 family. In terms of assembly, the 26S proteasome is composed of a core protease, known as the 20S proteasome, capped at one or both ends by the 19S regulatory complex (RC). The RC is composed of at least 18 different subunits in two subcomplexes, the base and the lid, which form the portions proximal and distal to the 20S proteolytic core, respectively.

It is found in the nucleus. Acts as a regulatory subunit of the 26 proteasome which is involved in the ATP-dependent degradation of ubiquitinated proteins. This is Probable 26S proteasome non-ATPase regulatory subunit 3 (21D7) from Nicotiana tabacum (Common tobacco).